A 520-amino-acid polypeptide reads, in one-letter code: Lysine--tRNA ligase (520 aa).

Residues 1-21 (MSDHLIPSIPTPAAAPAAAPA) form a disordered region. Residues 12-21 (PAAAPAAAPA) show a composition bias toward low complexity. Mg(2+) contacts are provided by E430 and E437.

It belongs to the class-II aminoacyl-tRNA synthetase family. In terms of assembly, homodimer. It depends on Mg(2+) as a cofactor.

It is found in the cytoplasm. It catalyses the reaction tRNA(Lys) + L-lysine + ATP = L-lysyl-tRNA(Lys) + AMP + diphosphate. The polypeptide is Lysine--tRNA ligase (Variovorax paradoxus (strain S110)).